Consider the following 73-residue polypeptide: UPF0235 protein SYO3AOP1_0257 (73 aa).

Belongs to the UPF0235 family.

The protein is UPF0235 protein SYO3AOP1_0257 of Sulfurihydrogenibium sp. (strain YO3AOP1).